The primary structure comprises 368 residues: MEKSSNTTGSGGPKSDSQLPEKLRRTFSARAAKIKARKANRETSAAKIQRAWYIYVDKSLFKLLKHTVCAAEYCVAHELLKKVSPTEAALLKDPSMKCKVRFRFSGETFPPCIVFKIFLKSDSRGFTYFSGKNLLKPSSKAVADAYKIMGERKFYQQIMQDEYIFQKFKIADHMDVVTVQDYMQFCSLTDETPASSGGKNNYWRRLNLSNIPRTMMMYDIVDYAESGVISDRLQKEKKYLLQKPRTEEMRLHQLDIVSKVRYPTITTIRPFYQPWEQKREMKHLGRRSKKAQKRVEKMKKAYKESKEEKASSQEPPASRTQIKKKVIFYTPSFEILKVEELIDTDLESEERELFAWYQDLYVKHSSLF.

Disordered regions lie at residues 1-22 (MEKS…LPEK) and 282-317 (KHLG…EPPA). Residues 293–311 (KRVEKMKKAYKESKEEKAS) show a composition bias toward basic and acidic residues.

This is an uncharacterized protein from Mus musculus (Mouse).